We begin with the raw amino-acid sequence, 416 residues long: STAM-binding protein-like (416 aa).

Residues 214-244 (SYGTVQPHPPAVDRSLKPSSYGSNSSGVTSD) are disordered. Low complexity predominate over residues 230-243 (KPSSYGSNSSGVTS). Residues 249-380 (VKIPRDVCCK…LTDYGMKEIG (132 aa)) form the MPN domain. Positions 327, 329, 340, 342, 382, 388, and 390 each coordinate Zn(2+). Residues 327–340 (HTHPTQTAFLSSVD) carry the JAMM motif motif.

This sequence belongs to the peptidase M67C family. The cofactor is Zn(2+).

Functionally, zinc metalloprotease that specifically cleaves 'Lys-63'-linked polyubiquitin chains. Does not cleave 'Lys-48'-linked polyubiquitin chains. Functions at the endosome and is able to oppose the ubiquitin-dependent sorting of receptors to lysosomes. In Xenopus laevis (African clawed frog), this protein is STAM-binding protein-like (stambp).